The primary structure comprises 98 residues: uncharacterized protein (98 aa).

Positions 37-91 (LITSRQQLGISQKQLETLSGVKQPMIARIEKGQTNPQLETLLKLLAPLGKTLSIV) constitute an HTH cro/C1-type domain. The segment at residues 48 to 67 (QKQLETLSGVKQPMIARIEK) is a DNA-binding region (H-T-H motif).

This is an uncharacterized protein from Haemophilus influenzae (strain ATCC 51907 / DSM 11121 / KW20 / Rd).